A 312-amino-acid chain; its full sequence is Olfactory receptor 2T8 (312 aa).

Residues 1 to 26 (MENGSYTSYFILLGLFNHTRAHQVLF) are Extracellular-facing. N-linked (GlcNAc...) asparagine glycosylation is found at Asn-3 and Asn-17. The chain crosses the membrane as a helical span at residues 27–47 (MMVLSIVLTSLFGNSLMILLI). Topologically, residues 48-55 (HWDHRLHT) are cytoplasmic. A helical transmembrane segment spans residues 56 to 76 (PMYFLLSQLSLMDVMLVSTTV). The Extracellular segment spans residues 77 to 96 (PKMAADYLTGSKAISRAGCG). A disulfide bridge links Cys-95 with Cys-177. The helical transmembrane segment at 97–117 (AQIFFLPTLGGGECFLLAAMA) threads the bilayer. At 118-143 (YDRYAAVCHPLRYPTLMSWQLCLRMN) the chain is on the cytoplasmic side. The helical transmembrane segment at 144 to 164 (LSCWLLGAADGLLQAVATLSF) threads the bilayer. Residues 165–201 (PYCGAHEIDHFFCETPVLVRLACADTSVFENAMYICC) are Extracellular-facing. The chain crosses the membrane as a helical span at residues 202 to 222 (VLMLLVPFSLILSSYGLILAA). The Cytoplasmic segment spans residues 223-234 (VLHMRSTEARKK). The chain crosses the membrane as a helical span at residues 235–255 (AFATCSSHVAVVGLFYGAAIF). The Extracellular portion of the chain corresponds to 256-269 (TYMRPKSHRSTNHD). The chain crosses the membrane as a helical span at residues 270 to 290 (KVVSAFYTMFTPLLNPLIYSV). Residues 291–312 (KNSEVKGALTRCMGRCVALSRE) are Cytoplasmic-facing.

The protein belongs to the G-protein coupled receptor 1 family.

Its subcellular location is the cell membrane. Odorant receptor. The chain is Olfactory receptor 2T8 (OR2T8) from Homo sapiens (Human).